The sequence spans 88 residues: Augerpeptide Hhe9a (88 aa).

The signal sequence occupies residues 1-21 (MMTKTGLVLLFAFLLVFPVSS). Residues 22-49 (LPMDAEAGHARLEMDKRDAGNEAWTRLL) constitute a propeptide that is removed on maturation. Cystine bridges form between Cys-56/Cys-71, Cys-61/Cys-73, and Cys-67/Cys-86.

As to expression, expressed by the venom duct.

It localises to the secreted. This is Augerpeptide Hhe9a from Hastula hectica (Sea snail).